Reading from the N-terminus, the 611-residue chain is Brain-enriched guanylate kinase-associated protein (611 aa).

The residue at position 156 (Tyr156) is a Phosphotyrosine. A phosphoserine mark is found at Ser219, Ser248, and Ser265. Residue Thr268 is modified to Phosphothreonine. 3 positions are modified to phosphoserine: Ser284, Ser364, and Ser391. The residue at position 399 (Arg399) is an Asymmetric dimethylarginine. 7 positions are modified to phosphoserine: Ser474, Ser484, Ser494, Ser496, Ser519, Ser521, and Ser525. A disordered region spans residues 520–611 (LSPSRSADPL…KAQLYGTLLN (92 aa)). Residues 554-563 (EPEHGSRDSL) are compositionally biased toward basic and acidic residues. A phosphoserine mark is found at Ser571 and Ser581.

As to quaternary structure, interacts with DLG4 and DLGAP1 and forms a ternary complex. In terms of tissue distribution, brain-specific. Expressed in neurons and rather enriched at synaptic junctions.

Its subcellular location is the cytoplasm. It is found in the membrane. In terms of biological role, may sustain the structure of the postsynaptic density (PSD). The polypeptide is Brain-enriched guanylate kinase-associated protein (Begain) (Rattus norvegicus (Rat)).